A 182-amino-acid polypeptide reads, in one-letter code: Methyl-CpG-binding domain-containing protein 5 (182 aa).

2 disordered regions span residues 1-56 and 80-126; these read MSNG…GTVD and HGTP…KPLN. The MBD domain occupies 25–101; the sequence is KRATPGDDNW…ENGDSHSEHS (77 aa). The segment covering 92-105 has biased composition (basic and acidic residues); it reads ENGDSHSEHSEGRG. Over residues 106–115 the composition is skewed to basic residues; the sequence is SARRQTKSNK.

Homodimer and heterodimer with MBD6. Interacts with DDM1 via its MBD domain. Mostly expressed in flowers, and, to a lower extent, in seedlings, buds, stems and mature seeds, but barely in roots, exclusively in root meristem cells at tips (at protein level).

Its subcellular location is the nucleus. The protein resides in the chromosome. Transcriptional regulator that binds CpG islands in promoters where the DNA is methylated at position 5 of cytosine within CpG dinucleotides. In addition, binds specifically methylated m(5)CpNpN but not m(5)CpNpG (N is A, T or C). Plays probably a role in gene silencing. This Arabidopsis thaliana (Mouse-ear cress) protein is Methyl-CpG-binding domain-containing protein 5 (MBD5).